The primary structure comprises 100 residues: Large ribosomal subunit protein uL23 (100 aa).

It belongs to the universal ribosomal protein uL23 family. Part of the 50S ribosomal subunit. Contacts protein L29, and trigger factor when it is bound to the ribosome.

In terms of biological role, one of the early assembly proteins it binds 23S rRNA. One of the proteins that surrounds the polypeptide exit tunnel on the outside of the ribosome. Forms the main docking site for trigger factor binding to the ribosome. The sequence is that of Large ribosomal subunit protein uL23 from Shewanella denitrificans (strain OS217 / ATCC BAA-1090 / DSM 15013).